Consider the following 863-residue polypeptide: Leucine--tRNA ligase (863 aa).

The 'HIGH' region motif lies at 40 to 51 (PYPSGAGLHVGH). The 'KMSKS' region signature appears at 635–639 (KMSKS). Lysine 638 is an ATP binding site.

This sequence belongs to the class-I aminoacyl-tRNA synthetase family.

The protein localises to the cytoplasm. The catalysed reaction is tRNA(Leu) + L-leucine + ATP = L-leucyl-tRNA(Leu) + AMP + diphosphate. The chain is Leucine--tRNA ligase from Leptospira interrogans serogroup Icterohaemorrhagiae serovar Lai (strain 56601).